The following is a 185-amino-acid chain: NADH-quinone oxidoreductase subunit B (185 aa).

[4Fe-4S] cluster is bound by residues Cys-38, Cys-39, Cys-104, and Cys-133. The segment covering 165–176 has biased composition (basic and acidic residues); that stretch reads AAEAYREEERQA. Positions 165–185 are disordered; it reads AAEAYREEERQAARSALGPRS.

It belongs to the complex I 20 kDa subunit family. As to quaternary structure, NDH-1 is composed of 14 different subunits. Subunits NuoB, C, D, E, F, and G constitute the peripheral sector of the complex. The cofactor is [4Fe-4S] cluster.

Its subcellular location is the cell membrane. The catalysed reaction is a quinone + NADH + 5 H(+)(in) = a quinol + NAD(+) + 4 H(+)(out). Its function is as follows. NDH-1 shuttles electrons from NADH, via FMN and iron-sulfur (Fe-S) centers, to quinones in the respiratory chain. The immediate electron acceptor for the enzyme in this species is believed to be ubiquinone. Couples the redox reaction to proton translocation (for every two electrons transferred, four hydrogen ions are translocated across the cytoplasmic membrane), and thus conserves the redox energy in a proton gradient. The protein is NADH-quinone oxidoreductase subunit B of Thermomicrobium roseum (strain ATCC 27502 / DSM 5159 / P-2).